The sequence spans 116 residues: Iron-sulfur cluster insertion protein ErpA (116 aa).

Iron-sulfur cluster is bound by residues C44, C108, and C110.

Belongs to the HesB/IscA family. Homodimer. Iron-sulfur cluster serves as cofactor.

In terms of biological role, required for insertion of 4Fe-4S clusters for at least IspG. In Francisella tularensis subsp. mediasiatica (strain FSC147), this protein is Iron-sulfur cluster insertion protein ErpA.